Consider the following 211-residue polypeptide: Transcriptional regulatory protein RcsA (211 aa).

In terms of domain architecture, HTH luxR-type spans 135-200; it reads LDVHPLTLSQ…VIYHVVRLTD (66 aa). A DNA-binding region (H-T-H motif) is located at residues 159-178; sequence TIQISDKMQIKAKTVSSHKG.

It belongs to the RcsA family.

Component of the Rcs signaling system, which controls transcription of numerous genes. Binds to DNA to regulate expression of genes. The protein is Transcriptional regulatory protein RcsA of Pantoea stewartii subsp. stewartii (Erwinia stewartii).